A 134-amino-acid chain; its full sequence is Arsenate reductase 2 (134 aa).

Catalysis depends on nucleophile residues Cys-11, Cys-83, and Cys-90. Intrachain disulfides connect Cys-11–Cys-83 and Cys-83–Cys-90.

It belongs to the low molecular weight phosphotyrosine protein phosphatase family. Thioredoxin-coupled ArsC subfamily.

The protein resides in the cytoplasm. It carries out the reaction arsenate + [thioredoxin]-dithiol + H(+) = arsenite + [thioredoxin]-disulfide + H2O. Functionally, catalyzes the reduction of arsenate [As(V)] to arsenite [As(III)]. This chain is Arsenate reductase 2, found in Bacillus cereus (strain ATCC 10987 / NRS 248).